The following is a 333-amino-acid chain: Cell shape-determining protein Mbl (333 aa).

ATP is bound by residues 12–14 (TAN), 156–158 (GGT), 204–207 (EDIK), and 284–287 (GGAL).

This sequence belongs to the FtsA/MreB family. In terms of assembly, forms polymers.

It is found in the cytoplasm. Its function is as follows. Forms membrane-associated dynamic filaments that are essential for cell shape determination. Acts by regulating cell wall synthesis and cell elongation, and thus cell shape. A feedback loop between cell geometry and Mbl localization may maintain elongated cell shape by targeting cell wall growth to regions of negative cell wall curvature. The chain is Cell shape-determining protein Mbl from Bacillus cereus (strain ATCC 10987 / NRS 248).